A 118-amino-acid chain; its full sequence is MRNWRWLLLVLAALLAWLQHRFWFGPGNSGEVRMLQVQIVQQHQENERLRQRNASLAAEVKNLKDGDAAIEERARSELGMIKPGEIFYRVVEDIPAPLPNDTSADHGVDLSQPRREKR.

Over 1 to 6 (MRNWRW) the chain is Cytoplasmic. The helical transmembrane segment at 7-24 (LLLVLAALLAWLQHRFWF) threads the bilayer. Over 25–118 (GPGNSGEVRM…DLSQPRREKR (94 aa)) the chain is Periplasmic. Residues 30–66 (GEVRMLQVQIVQQHQENERLRQRNASLAAEVKNLKDG) adopt a coiled-coil conformation. Residues 98-118 (LPNDTSADHGVDLSQPRREKR) form a disordered region. A compositionally biased stretch (basic and acidic residues) spans 103-118 (SADHGVDLSQPRREKR).

Belongs to the FtsB family. In terms of assembly, part of a complex composed of FtsB, FtsL and FtsQ.

The protein resides in the cell inner membrane. Its function is as follows. Essential cell division protein. May link together the upstream cell division proteins, which are predominantly cytoplasmic, with the downstream cell division proteins, which are predominantly periplasmic. This is Cell division protein FtsB from Xylella fastidiosa (strain M12).